The sequence spans 222 residues: Probable transaldolase (222 aa).

The Schiff-base intermediate with substrate role is filled by Lys83.

Belongs to the transaldolase family. Type 3B subfamily.

Its subcellular location is the cytoplasm. It carries out the reaction D-sedoheptulose 7-phosphate + D-glyceraldehyde 3-phosphate = D-erythrose 4-phosphate + beta-D-fructose 6-phosphate. It participates in carbohydrate degradation; pentose phosphate pathway; D-glyceraldehyde 3-phosphate and beta-D-fructose 6-phosphate from D-ribose 5-phosphate and D-xylulose 5-phosphate (non-oxidative stage): step 2/3. In terms of biological role, transaldolase is important for the balance of metabolites in the pentose-phosphate pathway. The sequence is that of Probable transaldolase from Nitrosopumilus maritimus (strain SCM1).